Reading from the N-terminus, the 176-residue chain is Large ribosomal subunit protein uL6 (176 aa).

The protein belongs to the universal ribosomal protein uL6 family. As to quaternary structure, part of the 50S ribosomal subunit.

In terms of biological role, this protein binds to the 23S rRNA, and is important in its secondary structure. It is located near the subunit interface in the base of the L7/L12 stalk, and near the tRNA binding site of the peptidyltransferase center. This is Large ribosomal subunit protein uL6 from Burkholderia mallei (strain NCTC 10247).